The sequence spans 269 residues: MNKRLRDAVKKGNLFIPFITAGDPVREATIALALSLQRSGADVLELGIPYSDPLADGPVIQNASKRALAGGMTLAKAMALVPEMRKEGLTIPVIVFTYANPLLQFGFERFCETACDYGIDGLLVPDLPFEESETLANECEKQGLALISLVAPTSQQRIKAIASRAQGFLYCVSSLGVTGARKTLHPQVEAFLKLVKEASPVPFVVGFGISSYEQVEEMGRHADGVVIGSAIVEQIGLRCEALKQAESRDEAVKEIEQYVNSLLHPAPTY.

Catalysis depends on proton acceptor residues glutamate 45 and aspartate 56.

Belongs to the TrpA family. Tetramer of two alpha and two beta chains.

It carries out the reaction (1S,2R)-1-C-(indol-3-yl)glycerol 3-phosphate + L-serine = D-glyceraldehyde 3-phosphate + L-tryptophan + H2O. Its pathway is amino-acid biosynthesis; L-tryptophan biosynthesis; L-tryptophan from chorismate: step 5/5. The alpha subunit is responsible for the aldol cleavage of indoleglycerol phosphate to indole and glyceraldehyde 3-phosphate. The chain is Tryptophan synthase alpha chain from Shouchella clausii (strain KSM-K16) (Alkalihalobacillus clausii).